A 290-amino-acid chain; its full sequence is Ribonuclease HIII (290 aa).

The RNase H type-2 domain maps to L78–A290. Residues D84, E85, and D187 each contribute to the a divalent metal cation site.

The protein belongs to the RNase HII family. RnhC subfamily. The cofactor is Mn(2+). Mg(2+) serves as cofactor.

It localises to the cytoplasm. The enzyme catalyses Endonucleolytic cleavage to 5'-phosphomonoester.. Its function is as follows. Endonuclease that specifically degrades the RNA of RNA-DNA hybrids. The chain is Ribonuclease HIII from Streptococcus pneumoniae serotype 2 (strain D39 / NCTC 7466).